The primary structure comprises 618 residues: MIPSSSPMESRHRLSFSNEKTSRRRFQRIEKGVKFNTLKLVLICIMLGALFTIYRFRYPPLQIPEIPTSFGLTTDPRYVATAEINWNHMSNLVEKHVFGRSEYQGIGLINLNDNEIDRFKEVTKSDCDHVALHLDYAAKNITWESLYPEWIDEVEEFEVPTCPSLPLIQIPGKPRIDLVIAKLPCDKSGKWSRDVARLHLQLAAARVAASSKGLHNVHVILVSDCFPIPNLFTGQELVARQGNIWLYKPNLHQLRQKLQLPVGSCELSVPLQAKDNFYSAGAKKEAYATILHSAQFYVCGAIAAAQSIRMSGSTRDLVILVDETISEYHKSGLVAAGWKIQMFQRIRNPNAVPNAYNEWNYSKFRLWQLTEYSKIIFIDADMLILRNIDFLFEFPEISATGNNATLFNSGLMVVEPSNSTFQLLMDNINEVVSYNGGDQGYLNEIFTWWHRIPKHMNFLKHFWEGDEPEIKKMKTSLFGADPPILYVLHYLGYNKPWLCFRDYDCNWNVDIFQEFASDEAHKTWWRVHDAMPENLHKFCLLRSKQKAQLEWDRRQAEKGNYKDGHWKIKIKDKRLKTCFEDFCFWESMLWHWGETNSTNNSSTTTTSSPPHKTALPSL.

Residues 32–54 (GVKFNTLKLVLICIMLGALFTIY) traverse the membrane as a helical; Signal-anchor for type II membrane protein segment. Residues Asp-379 and Asp-381 each contribute to the Mn(2+) site. Residues 379 to 381 (DAD), 408 to 410 (NSG), 435 to 439 (NGGDQ), and 489 to 495 (HYLGYNK) contribute to the substrate site. His-489 is a binding site for Mn(2+). A compositionally biased stretch (low complexity) spans 598–608 (TNNSSTTTTSS). Residues 598–618 (TNNSSTTTTSSPPHKTALPSL) are disordered.

The protein belongs to the glycosyltransferase 8 family. Glycogenin subfamily. Mn(2+) is required as a cofactor.

Its subcellular location is the golgi apparatus membrane. In terms of biological role, may be involved in the substitutions of the xylan backbone in stem glucuronoxylan. This Arabidopsis thaliana (Mouse-ear cress) protein is Putative UDP-glucuronate:xylan alpha-glucuronosyltransferase 3 (GUX3).